The primary structure comprises 853 residues: Trimethylguanosine synthase (853 aa).

Residues 53–80 form a disordered region; that stretch reads NNSGDQATEEEEGGYSCGTAESHDSKGI. Serine 55 is modified (phosphoserine). Threonine 60 carries the post-translational modification Phosphothreonine. Residues serine 85, serine 89, serine 96, and serine 141 each carry the phosphoserine modification. Residue tyrosine 146 is modified to Phosphotyrosine. The segment at 149-187 is disordered; sequence DDILASDDPSSIEQYENTRTYELQSKKDTETENPPVENT. Position 154 is a phosphoserine (serine 154). The segment covering 156 to 171 has biased composition (polar residues); sequence DPSSIEQYENTRTYEL. At serine 189 the chain carries Phosphoserine. Disordered stretches follow at residues 334-461 and 527-632; these read SQLD…GGIP and DEEA…KKVN. A compositionally biased stretch (low complexity) spans 367 to 382; it reads NGGTNEESNSSGNTNT. Phosphoserine occurs at positions 412, 438, and 578. The segment covering 431 to 442 has biased composition (acidic residues); the sequence is DIDENPASDFDD. Residues 564-578 are compositionally biased toward polar residues; sequence ETNNPEPEKCQSVSS. Basic and acidic residues predominate over residues 608–619; it reads PDSRQAETEAEV. The span at 620-630 shows a compositional bias: basic residues; the sequence is KKKKNKKKNKK. The tract at residues 631–846 is sufficient for catalytic activity; that stretch reads VNGLPPEIAA…TITAYFGDLI (216 aa). An S-adenosyl-L-methionine-binding site is contributed by aspartate 719. A N(7)-methylguanosine-binding site is contributed by tryptophan 766.

Belongs to the methyltransferase superfamily. Trimethylguanosine synthase family. May form homooligomers. Interacts with CREBBP/CBP, EED/WAIT1, EP300/P300, NCOA6/PRIP, PPARBP/PBP and SMN. In terms of tissue distribution, ubiquitously expressed. High expression in heart, skeletal muscle, kidney, liver and placenta.

It localises to the cytoplasm. Its subcellular location is the nucleus. It is found in the cajal body. The protein localises to the nucleolus. It carries out the reaction a 5'-end (N(7)-methyl 5'-triphosphoguanosine)-ribonucleoside in snRNA + S-adenosyl-L-methionine = a 5'-end (N(2),N(7)-dimethyl 5'-triphosphoguanosine)-ribonucleoside in snRNA + S-adenosyl-L-homocysteine + H(+). The catalysed reaction is a 5'-end (N(7)-methyl 5'-triphosphoguanosine)-ribonucleoside in snoRNA + S-adenosyl-L-methionine = a 5'-end (N(2),N(7)-dimethyl 5'-triphosphoguanosine)-ribonucleoside in snoRNA + S-adenosyl-L-homocysteine + H(+). The enzyme catalyses a 5'-end (N(2),N(7)-dimethyl 5'-triphosphoguanosine)-ribonucleoside in snRNA + S-adenosyl-L-methionine = a 5'-end (N(2),N(2),N(7)-trimethyl 5'-triphosphoguanosine)-ribonucleoside in snRNA + S-adenosyl-L-homocysteine + H(+). It catalyses the reaction a 5'-end (N(2),N(7)-dimethyl 5'-triphosphoguanosine)-ribonucleoside in snoRNA + S-adenosyl-L-methionine = a 5'-end (N(2),N(2),N(7)-trimethyl 5'-triphosphoguanosine)-ribonucleoside in snoRNA + S-adenosyl-L-homocysteine + H(+). Its function is as follows. Catalyzes the 2 serial methylation steps for the conversion of the 7-monomethylguanosine (m(7)G) caps of snRNAs and snoRNAs to a 2,2,7-trimethylguanosine (m(2,2,7)G) cap structure. The enzyme is specific for guanine, and N7 methylation must precede N2 methylation. Hypermethylation of the m7G cap of U snRNAs leads to their concentration in nuclear foci, their colocalization with coilin and the formation of canonical Cajal bodies (CBs). Plays a role in transcriptional regulation. The chain is Trimethylguanosine synthase (TGS1) from Homo sapiens (Human).